We begin with the raw amino-acid sequence, 1038 residues long: Type I restriction enzyme EcoR124I/EcoR124II endonuclease subunit (1038 aa).

Residues 31-249 are nuclease domain; it reads QSESDLEREL…LKDFTATCFQ (219 aa). Residues 250 to 469 form a motor 1 domain region; it reads KHTLLNVLVN…SYVITDAIRD (220 aa). In terms of domain architecture, Helicase ATP-binding spans 294 to 439; it reads KNWSKPESGG…YQFGFTGTPI (146 aa). ATP is bound at residue 307–314; that stretch reads HTTGSGKT. A DEAH box motif is present at residues 408–411; that stretch reads DECH. The segment at 470 to 702 is motor 2 domain; it reads EKVLKFKVDY…YDATKTFGNI (233 aa). Positions 720–732 are motor 2-helicase linker; the sequence is GDKNTKNVVLEKS. The segment at 732-860 is helicase domain; that stretch reads SYTEYMEGFT…NDIRDWQRRE (129 aa). A helicase-CTD linker region spans residues 859–886; that stretch reads REKEAEKKEKSTTDWDDVVFEVDLLKSQ. The tract at residues 886-1038 is C-terminal domain; the sequence is QEINLDYILG…EKFKGVGGKI (153 aa).

It belongs to the HsdR family. A monomer in solution. The type I restriction/modification system is composed of three polypeptides R, M and S; the restriction enzyme has stoichiometry R(2)M(2)S(1) while the methyltransferase is M(2)S(1). There is an equilibrium between R(2)M(2)S(1) and R(1)M(2)S(1); the latter is methylation and translocation proficient but restriction deficient. In terms of assembly, (Microbial infection) Holoenenzyme interacts with Escherichia phage T7 protein Ocr; this interaction leads to the inhibition of the restriction activity, but may still allow methylation and translocation.

It catalyses the reaction Endonucleolytic cleavage of DNA to give random double-stranded fragments with terminal 5'-phosphates, ATP is simultaneously hydrolyzed.. In terms of biological role, the restriction (R) subunit of a type I restriction enzyme that recognizes 5'-GAAN(6)RTCG-3' (for EcoR124I) and 5'-GAAN(7)RTCG-3' (for EcoR124II) and cleaves a random distance away. Subunit R is required for both nuclease and ATPase activities, but not for modification. After locating an unmethylated recognition site, the enzyme complex serves as a molecular motor that translocates DNA in an ATP-dependent manner until a collision occurs that triggers cleavage. The enzyme undergoes major structural changes to bring the motor domains into contact with DNA, allowing DNA translocation. This prevents DNA access to the catalytic domains of both the R and M subunits, preventing both restriction and methylation. The R(1)M(2)S(1) complex translocates an average of 555 bp/second on nicked DNA; the R(2)M(2)S(1) complex translocates at double that speed. The 2 R subunit motors are independent and track along the helical pitch of the DNA, inducing positive supercoiling ahead of themselves. This Escherichia coli protein is Type I restriction enzyme EcoR124I/EcoR124II endonuclease subunit.